The primary structure comprises 212 residues: Thymidine kinase (212 aa).

ATP contacts are provided by residues 11–18 (SPMNAGKT), 43–45 (DTR), and 86–89 (DEAQ). E87 acts as the Proton acceptor in catalysis. F119 contributes to the substrate binding site. Zn(2+)-binding residues include C144, C147, C183, and C186.

The protein belongs to the thymidine kinase family.

The catalysed reaction is thymidine + ATP = dTMP + ADP + H(+). The polypeptide is Thymidine kinase (TK) (Encephalitozoon cuniculi (strain GB-M1) (Microsporidian parasite)).